The following is a 579-amino-acid chain: V-type ATP synthase alpha chain (579 aa).

ATP is bound at residue 238–245; it reads GPFGAGKT.

The protein belongs to the ATPase alpha/beta chains family.

The catalysed reaction is ATP + H2O + 4 H(+)(in) = ADP + phosphate + 5 H(+)(out). Its function is as follows. Produces ATP from ADP in the presence of a proton gradient across the membrane. The V-type alpha chain is a catalytic subunit. The protein is V-type ATP synthase alpha chain of Borrelia hermsii (strain HS1 / DAH).